We begin with the raw amino-acid sequence, 178 residues long: ATP synthase subunit delta (178 aa).

The protein belongs to the ATPase delta chain family. In terms of assembly, F-type ATPases have 2 components, F(1) - the catalytic core - and F(0) - the membrane proton channel. F(1) has five subunits: alpha(3), beta(3), gamma(1), delta(1), epsilon(1). F(0) has three main subunits: a(1), b(2) and c(10-14). The alpha and beta chains form an alternating ring which encloses part of the gamma chain. F(1) is attached to F(0) by a central stalk formed by the gamma and epsilon chains, while a peripheral stalk is formed by the delta and b chains.

Its subcellular location is the cell membrane. In terms of biological role, f(1)F(0) ATP synthase produces ATP from ADP in the presence of a proton or sodium gradient. F-type ATPases consist of two structural domains, F(1) containing the extramembraneous catalytic core and F(0) containing the membrane proton channel, linked together by a central stalk and a peripheral stalk. During catalysis, ATP synthesis in the catalytic domain of F(1) is coupled via a rotary mechanism of the central stalk subunits to proton translocation. Functionally, this protein is part of the stalk that links CF(0) to CF(1). It either transmits conformational changes from CF(0) to CF(1) or is implicated in proton conduction. The protein is ATP synthase subunit delta of Streptococcus agalactiae serotype V (strain ATCC BAA-611 / 2603 V/R).